Reading from the N-terminus, the 360-residue chain is Phospho-N-acetylmuramoyl-pentapeptide-transferase (360 aa).

10 helical membrane passes run 26-46, 70-90, 94-114, 136-156, 164-184, 199-219, 236-256, 263-283, 289-309, and 339-359; these read GVLA…FFIA, GTPT…TLLW, GNPL…IGFV, LQSL…SNPV, FIPH…YFVI, GLAI…AYVS, SGQM…FLWF, VFMG…VAIV, VLFI…IQVV, and AVRF…SLKI.

It belongs to the glycosyltransferase 4 family. MraY subfamily. The cofactor is Mg(2+).

Its subcellular location is the cell inner membrane. The enzyme catalyses UDP-N-acetyl-alpha-D-muramoyl-L-alanyl-gamma-D-glutamyl-meso-2,6-diaminopimeloyl-D-alanyl-D-alanine + di-trans,octa-cis-undecaprenyl phosphate = di-trans,octa-cis-undecaprenyl diphospho-N-acetyl-alpha-D-muramoyl-L-alanyl-D-glutamyl-meso-2,6-diaminopimeloyl-D-alanyl-D-alanine + UMP. It participates in cell wall biogenesis; peptidoglycan biosynthesis. Functionally, catalyzes the initial step of the lipid cycle reactions in the biosynthesis of the cell wall peptidoglycan: transfers peptidoglycan precursor phospho-MurNAc-pentapeptide from UDP-MurNAc-pentapeptide onto the lipid carrier undecaprenyl phosphate, yielding undecaprenyl-pyrophosphoryl-MurNAc-pentapeptide, known as lipid I. The chain is Phospho-N-acetylmuramoyl-pentapeptide-transferase from Acidithiobacillus ferrooxidans (strain ATCC 23270 / DSM 14882 / CIP 104768 / NCIMB 8455) (Ferrobacillus ferrooxidans (strain ATCC 23270)).